Reading from the N-terminus, the 653-residue chain is Testicular spindle-associated protein SHCBP1L (653 aa).

A disordered region spans residues 1–65 (MASGSKASVP…PVKGKAGRET (65 aa)). Serine 8 bears the Phosphoserine mark. Residues 28–41 (SAVSGDTAAATTLK) show a composition bias toward polar residues. Residues 46-56 (PVRSVVASPRP) show a composition bias toward low complexity. A Phosphoserine modification is found at serine 53. Residues 299–326 (IAQRFKKTLEKYKNKRVELIEYQSNIKE) adopt a coiled-coil conformation. PbH1 repeat units lie at residues 493 to 514 (SGHM…CVLT), 515 to 537 (GAAL…ELYP), 538 to 571 (GSIA…NMKV), and 574 to 596 (APKL…SILQ). Lysine 570 carries the N6-acetyllysine modification. Lysine 645 is modified (N6-acetyllysine).

In terms of assembly, interacts with HSPA2; this interaction may promote the recruitment of HSPA2 to the spindle. Expressed in spermatocytes and elongating spermatids inside the seminiferous tubules (at protein level). Testis-specific.

It is found in the cytoplasm. It localises to the cytoskeleton. The protein resides in the spindle. Testis-specific spindle-associated factor that plays a role in spermatogenesis. In association with HSPA2, participates in the maintenance of spindle integrity during meiosis in male germ cells. This is Testicular spindle-associated protein SHCBP1L from Homo sapiens (Human).